The following is a 421-amino-acid chain: Enolase (421 aa).

(2R)-2-phosphoglycerate is bound at residue Gln-165. The active-site Proton donor is Glu-207. Asp-244, Glu-285, and Asp-312 together coordinate Mg(2+). Residues Lys-337, Arg-366, Ser-367, and Lys-388 each coordinate (2R)-2-phosphoglycerate. The active-site Proton acceptor is the Lys-337.

Belongs to the enolase family. Requires Mg(2+) as cofactor.

Its subcellular location is the cytoplasm. The protein localises to the secreted. The protein resides in the cell surface. It catalyses the reaction (2R)-2-phosphoglycerate = phosphoenolpyruvate + H2O. It functions in the pathway carbohydrate degradation; glycolysis; pyruvate from D-glyceraldehyde 3-phosphate: step 4/5. Catalyzes the reversible conversion of 2-phosphoglycerate (2-PG) into phosphoenolpyruvate (PEP). It is essential for the degradation of carbohydrates via glycolysis. In Ehrlichia chaffeensis (strain ATCC CRL-10679 / Arkansas), this protein is Enolase.